Here is a 314-residue protein sequence, read N- to C-terminus: 2-oxo-3-(phosphooxy)propyl 3-oxoalkanoate synthase (314 aa).

This sequence belongs to the AfsA family.

The catalysed reaction is a medium-chain 3-oxoacyl-[ACP] + dihydroxyacetone phosphate = a (4-alkanoyl-5-oxo-2,5-dihydrofuran-3-yl)methyl phosphate + holo-[ACP] + H2O. Functionally, involved of the biosynthesis of S.coelicolor butanolide 1 (SCB1), a gamma-butyrolactone that triggers antibiotic production. This chain is 2-oxo-3-(phosphooxy)propyl 3-oxoalkanoate synthase, found in Streptomyces coelicolor (strain ATCC BAA-471 / A3(2) / M145).